The following is a 321-amino-acid chain: Sideroflexin-3 (321 aa).

N-acetylmethionine is present on Met1. Transmembrane regions (helical) follow at residues 146 to 164 (LGTA…ALGL), 174 to 194 (LVGR…NIPL), 226 to 246 (FQVV…PPLI), and 266 to 286 (LQVG…CALF).

This sequence belongs to the sideroflexin family.

The protein resides in the mitochondrion membrane. It catalyses the reaction L-serine(in) = L-serine(out). Its function is as follows. Mitochondrial serine transporter that mediates transport of serine into mitochondria, an important step of the one-carbon metabolism pathway. Mitochondrial serine is converted to glycine and formate, which then exits to the cytosol where it is used to generate the charged folates that serve as one-carbon donors. The polypeptide is Sideroflexin-3 (Homo sapiens (Human)).